Here is a 188-residue protein sequence, read N- to C-terminus: Elongation factor P (188 aa).

This sequence belongs to the elongation factor P family.

Its subcellular location is the cytoplasm. It participates in protein biosynthesis; polypeptide chain elongation. In terms of biological role, involved in peptide bond synthesis. Stimulates efficient translation and peptide-bond synthesis on native or reconstituted 70S ribosomes in vitro. Probably functions indirectly by altering the affinity of the ribosome for aminoacyl-tRNA, thus increasing their reactivity as acceptors for peptidyl transferase. This chain is Elongation factor P, found in Sulfurimonas denitrificans (strain ATCC 33889 / DSM 1251) (Thiomicrospira denitrificans (strain ATCC 33889 / DSM 1251)).